A 289-amino-acid polypeptide reads, in one-letter code: D-alanine aminotransferase (289 aa).

Tyrosine 31 is a binding site for substrate. Pyridoxal 5'-phosphate is bound at residue arginine 50. Arginine 99 and histidine 101 together coordinate substrate. Lysine 147 serves as the catalytic Proton acceptor. At lysine 147 the chain carries N6-(pyridoxal phosphate)lysine. Glutamate 179 is a pyridoxal 5'-phosphate binding site.

This sequence belongs to the class-IV pyridoxal-phosphate-dependent aminotransferase family. As to quaternary structure, homodimer. Pyridoxal 5'-phosphate is required as a cofactor.

The enzyme catalyses D-alanine + 2-oxoglutarate = D-glutamate + pyruvate. In terms of biological role, acts on the D-isomers of alanine, leucine, aspartate, glutamate, aminobutyrate, norvaline and asparagine. The enzyme transfers an amino group from a substrate D-amino acid to the pyridoxal phosphate cofactor to form pyridoxamine and an alpha-keto acid in the first half-reaction. The second half-reaction is the reverse of the first, transferring the amino group from the pyridoxamine to a second alpha-keto acid to form the product D-amino acid via a ping-pong mechanism. This is an important process in the formation of D-alanine and D-glutamate, which are essential bacterial cell wall components. In Listeria innocua serovar 6a (strain ATCC BAA-680 / CLIP 11262), this protein is D-alanine aminotransferase (dat).